The chain runs to 201 residues: Ribonuclease HII (201 aa).

In terms of domain architecture, RNase H type-2 spans 12 to 201 (DLVAGVDEVG…VRELLDVSVQ (190 aa)). A divalent metal cation-binding residues include Asp18, Glu19, and Asp110.

Belongs to the RNase HII family. Mn(2+) serves as cofactor. The cofactor is Mg(2+).

It localises to the cytoplasm. The enzyme catalyses Endonucleolytic cleavage to 5'-phosphomonoester.. Endonuclease that specifically degrades the RNA of RNA-DNA hybrids. This Pseudomonas aeruginosa (strain ATCC 15692 / DSM 22644 / CIP 104116 / JCM 14847 / LMG 12228 / 1C / PRS 101 / PAO1) protein is Ribonuclease HII.